The following is a 306-amino-acid chain: Glutamyl-Q tRNA(Asp) synthetase (306 aa).

Residues R29 to S33 and D65 each bind L-glutamate. A 'HIGH' region motif is present at residues P32 to N42. Residues C121, C123, Y141, and C145 each contribute to the Zn(2+) site. The L-glutamate site is built by Y188 and R206. The 'KMSKS' region signature appears at K244–R248. Position 247 (K247) interacts with ATP.

It belongs to the class-I aminoacyl-tRNA synthetase family. GluQ subfamily. It depends on Zn(2+) as a cofactor.

Catalyzes the tRNA-independent activation of glutamate in presence of ATP and the subsequent transfer of glutamate onto a tRNA(Asp). Glutamate is transferred on the 2-amino-5-(4,5-dihydroxy-2-cyclopenten-1-yl) moiety of the queuosine in the wobble position of the QUC anticodon. The protein is Glutamyl-Q tRNA(Asp) synthetase of Prochlorococcus marinus (strain MIT 9303).